Consider the following 498-residue polypeptide: POTE ankyrin domain family member A (498 aa).

ANK repeat units lie at residues 98–127 (KKRT…QLHV), 131–160 (KKRT…DPNL), 164–193 (YGNT…DIES), 197–226 (GGLT…NLNA), and 230–259 (FGRT…DVFS). A disordered region spans residues 289 to 410 (NQMPNNSSGN…SNEKNKVKSQ (122 aa)). Residues 290-302 (QMPNNSSGNSNPE) show a composition bias toward polar residues. Positions 303–338 (QDLKLTSEEEPQRLKGSENSQHEKVTQEPDINKDCD) are enriched in basic and acidic residues. The segment covering 348-359 (HGSNNVGLSENL) has biased composition (polar residues). Residues 392–406 (EEYHRPEKKSNEKNK) are compositionally biased toward basic and acidic residues. The stretch at 469 to 497 (EHLLELKNSHYEQLTVEVEQMENMVHVLQ) forms a coiled coil.

This sequence belongs to the POTE family.

This chain is POTE ankyrin domain family member A (POTEA), found in Homo sapiens (Human).